A 220-amino-acid polypeptide reads, in one-letter code: 2-hydroxy-3-keto-5-methylthiopentenyl-1-phosphate phosphatase (220 aa).

It belongs to the HAD-like hydrolase superfamily. MtnX family.

It catalyses the reaction 2-hydroxy-5-methylsulfanyl-3-oxopent-1-enyl phosphate + H2O = 1,2-dihydroxy-5-(methylsulfanyl)pent-1-en-3-one + phosphate. It participates in amino-acid biosynthesis; L-methionine biosynthesis via salvage pathway; L-methionine from S-methyl-5-thio-alpha-D-ribose 1-phosphate: step 4/6. Its function is as follows. Dephosphorylates 2-hydroxy-3-keto-5-methylthiopentenyl-1-phosphate (HK-MTPenyl-1-P) yielding 1,2-dihydroxy-3-keto-5-methylthiopentene (DHK-MTPene). In Geobacillus thermodenitrificans (strain NG80-2), this protein is 2-hydroxy-3-keto-5-methylthiopentenyl-1-phosphate phosphatase.